A 208-amino-acid chain; its full sequence is Small ribosomal subunit protein uS4 (208 aa).

The 64-residue stretch at 97 to 160 (SRLDNIVFRL…KKNDKIAEAL (64 aa)) folds into the S4 RNA-binding domain.

Belongs to the universal ribosomal protein uS4 family. In terms of assembly, part of the 30S ribosomal subunit. Contacts protein S5. The interaction surface between S4 and S5 is involved in control of translational fidelity.

Functionally, one of the primary rRNA binding proteins, it binds directly to 16S rRNA where it nucleates assembly of the body of the 30S subunit. Its function is as follows. With S5 and S12 plays an important role in translational accuracy. The sequence is that of Small ribosomal subunit protein uS4 from Mesoplasma florum (strain ATCC 33453 / NBRC 100688 / NCTC 11704 / L1) (Acholeplasma florum).